Reading from the N-terminus, the 299-residue chain is Cytosolic sulfotransferase 1 (299 aa).

51 to 56 serves as a coordination point for 3'-phosphoadenylyl sulfate; the sequence is KAGTTW. The Proton acceptor role is filled by His113. Residues Arg135, Ser143, Tyr199, 233–238, and 261–263 each bind 3'-phosphoadenylyl sulfate; these read VQFDAM and RKG.

The protein belongs to the sulfotransferase 1 family. As to expression, expressed in liver.

Its subcellular location is the cytoplasm. Inhibited by Co(2+), Zn(2+), Cd(2+) and Pb(2+) ions. Inactivated by Hg(2+) and Cu(2+) ions. Sulfotransferase that utilizes 3'-phospho-5'-adenylyl sulfate (PAPS) as sulfonate donor to catalyze the sulfate conjugation of a variety of xenobiotic and endogenous compounds, including 2-naphthol, hydroxychlorobiphenyls, dopamine and T3 (triiodo-L-thyronine). The chain is Cytosolic sulfotransferase 1 from Danio rerio (Zebrafish).